The chain runs to 417 residues: Probable secreted beta-glucosidase PSU1 (417 aa).

An N-terminal signal peptide occupies residues 1–18; the sequence is MRFFETLALALLTTGALA.

The protein belongs to the SUN family.

The protein resides in the secreted. It localises to the cell wall. Involved in cell wall synthesis. May be required for the activation of 1,3-beta-glucan synthase. This Schizosaccharomyces pombe (strain 972 / ATCC 24843) (Fission yeast) protein is Probable secreted beta-glucosidase PSU1 (psu1).